Reading from the N-terminus, the 311-residue chain is Glycerol-3-phosphate dehydrogenase [NAD(P)+] (311 aa).

4 residues coordinate NADPH: Trp-11, Arg-30, Arg-31, and Lys-95. The sn-glycerol 3-phosphate site is built by Lys-95, Gly-123, and Ser-125. Ala-127 lines the NADPH pocket. Sn-glycerol 3-phosphate contacts are provided by Lys-177, Asp-230, Ser-240, Arg-241, and Asn-242. Lys-177 serves as the catalytic Proton acceptor. NADPH is bound at residue Arg-241. NADPH is bound by residues Val-265 and Glu-267.

Belongs to the NAD-dependent glycerol-3-phosphate dehydrogenase family.

It is found in the cytoplasm. It catalyses the reaction sn-glycerol 3-phosphate + NAD(+) = dihydroxyacetone phosphate + NADH + H(+). The enzyme catalyses sn-glycerol 3-phosphate + NADP(+) = dihydroxyacetone phosphate + NADPH + H(+). Its pathway is membrane lipid metabolism; glycerophospholipid metabolism. In terms of biological role, catalyzes the reduction of the glycolytic intermediate dihydroxyacetone phosphate (DHAP) to sn-glycerol 3-phosphate (G3P), the key precursor for phospholipid synthesis. This Bartonella bacilliformis (strain ATCC 35685 / KC583 / Herrer 020/F12,63) protein is Glycerol-3-phosphate dehydrogenase [NAD(P)+].